Here is an 88-residue protein sequence, read N- to C-terminus: Small ribosomal subunit protein uS15 (88 aa).

It belongs to the universal ribosomal protein uS15 family. Part of the 30S ribosomal subunit. Forms a bridge to the 50S subunit in the 70S ribosome, contacting the 23S rRNA.

Its function is as follows. One of the primary rRNA binding proteins, it binds directly to 16S rRNA where it helps nucleate assembly of the platform of the 30S subunit by binding and bridging several RNA helices of the 16S rRNA. Forms an intersubunit bridge (bridge B4) with the 23S rRNA of the 50S subunit in the ribosome. This Francisella tularensis subsp. holarctica (strain LVS) protein is Small ribosomal subunit protein uS15.